We begin with the raw amino-acid sequence, 87 residues long: Antitoxin YefM (87 aa).

It belongs to the phD/YefM antitoxin family. Forms a complex with YoeB which inhibits its toxin activity.

Functionally, antitoxin component of a type II toxin-antitoxin (TA) system. A probable antitoxin for the putative mRNA interferase YeoB. This is Antitoxin YefM from Streptomyces coelicolor (strain ATCC BAA-471 / A3(2) / M145).